Here is a 210-residue protein sequence, read N- to C-terminus: Uracil phosphoribosyltransferase (210 aa).

Residues Arg-78, Arg-103, and 130–138 (DPMLATGGT) contribute to the 5-phospho-alpha-D-ribose 1-diphosphate site. Residues Ile-193 and 198–200 (GDA) each bind uracil. Asp-199 contacts 5-phospho-alpha-D-ribose 1-diphosphate.

It belongs to the UPRTase family. Requires Mg(2+) as cofactor.

It carries out the reaction UMP + diphosphate = 5-phospho-alpha-D-ribose 1-diphosphate + uracil. It functions in the pathway pyrimidine metabolism; UMP biosynthesis via salvage pathway; UMP from uracil: step 1/1. Its activity is regulated as follows. Allosterically activated by GTP. Catalyzes the conversion of uracil and 5-phospho-alpha-D-ribose 1-diphosphate (PRPP) to UMP and diphosphate. This Stenotrophomonas maltophilia (strain R551-3) protein is Uracil phosphoribosyltransferase.